We begin with the raw amino-acid sequence, 311 residues long: tRNA pseudouridine synthase B (311 aa).

Asp-39 (nucleophile) is an active-site residue. The disordered stretch occupies residues Arg-237–Glu-268. The span at Ala-254–Glu-268 shows a compositional bias: low complexity.

The protein belongs to the pseudouridine synthase TruB family. Type 1 subfamily.

It carries out the reaction uridine(55) in tRNA = pseudouridine(55) in tRNA. Functionally, responsible for synthesis of pseudouridine from uracil-55 in the psi GC loop of transfer RNAs. The polypeptide is tRNA pseudouridine synthase B (Paenarthrobacter aurescens (strain TC1)).